The primary structure comprises 150 residues: Urease subunit beta (150 aa).

The span at 122 to 140 (GAVVGDSPAATPGTTGATG) shows a compositional bias: low complexity. A disordered region spans residues 122-150 (GAVVGDSPAATPGTTGATGDLPGYLGEGS).

This sequence belongs to the urease beta subunit family. Heterotrimer of UreA (gamma), UreB (beta) and UreC (alpha) subunits. Three heterotrimers associate to form the active enzyme.

It is found in the cytoplasm. The enzyme catalyses urea + 2 H2O + H(+) = hydrogencarbonate + 2 NH4(+). Its pathway is nitrogen metabolism; urea degradation; CO(2) and NH(3) from urea (urease route): step 1/1. This is Urease subunit beta from Frankia alni (strain DSM 45986 / CECT 9034 / ACN14a).